A 254-amino-acid polypeptide reads, in one-letter code: Type III pantothenate kinase (254 aa).

6 to 13 (DVGNTNTV) is an ATP binding site. Substrate contacts are provided by residues tyrosine 100 and 107–110 (GADR). The Proton acceptor role is filled by aspartate 109. Aspartate 129 is a K(+) binding site. Threonine 132 contacts ATP. Threonine 184 contacts substrate.

Belongs to the type III pantothenate kinase family. In terms of assembly, homodimer. NH4(+) is required as a cofactor. Requires K(+) as cofactor.

The protein resides in the cytoplasm. It catalyses the reaction (R)-pantothenate + ATP = (R)-4'-phosphopantothenate + ADP + H(+). It participates in cofactor biosynthesis; coenzyme A biosynthesis; CoA from (R)-pantothenate: step 1/5. In terms of biological role, catalyzes the phosphorylation of pantothenate (Pan), the first step in CoA biosynthesis. The sequence is that of Type III pantothenate kinase from Syntrophus aciditrophicus (strain SB).